The following is a 347-amino-acid chain: Ferredoxin--NADP reductase 1 (347 aa).

Residues threonine 26, aspartate 45, glutamine 53, tyrosine 58, valine 98, phenylalanine 133, aspartate 298, and serine 339 each contribute to the FAD site.

This sequence belongs to the ferredoxin--NADP reductase type 2 family. In terms of assembly, homodimer. FAD serves as cofactor.

The enzyme catalyses 2 reduced [2Fe-2S]-[ferredoxin] + NADP(+) + H(+) = 2 oxidized [2Fe-2S]-[ferredoxin] + NADPH. This Chloroherpeton thalassium (strain ATCC 35110 / GB-78) protein is Ferredoxin--NADP reductase 1.